We begin with the raw amino-acid sequence, 160 residues long: Ribosome maturation factor RimP (160 aa).

The protein belongs to the RimP family.

It localises to the cytoplasm. Required for maturation of 30S ribosomal subunits. The polypeptide is Ribosome maturation factor RimP (Orientia tsutsugamushi (strain Boryong) (Rickettsia tsutsugamushi)).